Consider the following 451-residue polypeptide: UDP-N-acetylmuramoylalanine--D-glutamate ligase (451 aa).

Gly-119 to Thr-125 provides a ligand contact to ATP.

The protein belongs to the MurCDEF family.

The protein resides in the cytoplasm. It catalyses the reaction UDP-N-acetyl-alpha-D-muramoyl-L-alanine + D-glutamate + ATP = UDP-N-acetyl-alpha-D-muramoyl-L-alanyl-D-glutamate + ADP + phosphate + H(+). It functions in the pathway cell wall biogenesis; peptidoglycan biosynthesis. Cell wall formation. Catalyzes the addition of glutamate to the nucleotide precursor UDP-N-acetylmuramoyl-L-alanine (UMA). The polypeptide is UDP-N-acetylmuramoylalanine--D-glutamate ligase (Geobacillus kaustophilus (strain HTA426)).